A 57-amino-acid chain; its full sequence is uncharacterized protein (57 aa).

The tract at residues 1–57 (MITPIGKNSNSNSNSNSNSNSNSNSNSNSNSNSNSNSNSNSNSNSNSNSNSNSNSNN) is disordered. The segment covering 8 to 57 (NSNSNSNSNSNSNSNSNSNSNSNSNSNSNSNSNSNSNSNSNSNSNSNSNN) has biased composition (low complexity).

This is an uncharacterized protein from Dictyostelium discoideum (Social amoeba).